The sequence spans 247 residues: UPF0280 protein MMP1236 (247 aa).

It belongs to the UPF0280 family.

The polypeptide is UPF0280 protein MMP1236 (Methanococcus maripaludis (strain DSM 14266 / JCM 13030 / NBRC 101832 / S2 / LL)).